The primary structure comprises 349 residues: Single-stranded TG1-3 DNA-binding protein (349 aa).

The RRM 1 domain maps to 45 to 127; sequence FRVFVGRLST…REIVVQKARP (83 aa). Disordered regions lie at residues 121-208 and 298-349; these read VVQK…PNSI and EDKQ…AITA. Ser-152 carries the phosphoserine modification. A compositionally biased stretch (polar residues) spans 168–179; it reads ANTATAPSSNEA. A compositionally biased stretch (basic and acidic residues) spans 181 to 191; the sequence is GVDKKQNEIKG. The region spanning 206-296 is the RRM 2 domain; that stretch reads NSIYVSGLSV…LTLVVKSAVF (91 aa). 2 stretches are compositionally biased toward basic and acidic residues: residues 298–310 and 327–340; these read EDKQ…KNEN and TEPK…EEKS.

Its subcellular location is the cytoplasm. The protein localises to the nucleus. It is found in the chromosome. The protein resides in the telomere. In terms of biological role, binds single-stranded telomeric sequences of the type (TG[1-3])n in vitro. Has a role in meiosis. The protein is Single-stranded TG1-3 DNA-binding protein (tcg1) of Schizosaccharomyces pombe (strain 972 / ATCC 24843) (Fission yeast).